We begin with the raw amino-acid sequence, 552 residues long: Chaperonin GroEL (552 aa).

ATP-binding positions include 30 to 33 (TLGP), lysine 51, 87 to 91 (DGTTT), glycine 415, 480 to 482 (NAA), and aspartate 496.

Belongs to the chaperonin (HSP60) family. Forms a cylinder of 14 subunits composed of two heptameric rings stacked back-to-back. Interacts with the co-chaperonin GroES.

Its subcellular location is the cytoplasm. It carries out the reaction ATP + H2O + a folded polypeptide = ADP + phosphate + an unfolded polypeptide.. In terms of biological role, together with its co-chaperonin GroES, plays an essential role in assisting protein folding. The GroEL-GroES system forms a nano-cage that allows encapsulation of the non-native substrate proteins and provides a physical environment optimized to promote and accelerate protein folding. The sequence is that of Chaperonin GroEL from Coxiella burnetii (strain RSA 493 / Nine Mile phase I).